A 344-amino-acid chain; its full sequence is 1-acyl-sn-glycerol-3-phosphate acyltransferase BAT2, chloroplastic (344 aa).

Residues 1–49 (MDVASAPGVSSHPPYYSKPICSSQSSLIRIPINKGCCFARSSNLITSLH) constitute a chloroplast transit peptide. Residues 113 to 133 (GICFCLVAGVSAIVLIVLMIT) form a helical membrane-spanning segment. The HXXXXD motif signature appears at 188–193 (HQSFLD). The chain crosses the membrane as a helical span at residues 210-230 (TGIFVIPVIGWAMSMMGVVPL).

It belongs to the 1-acyl-sn-glycerol-3-phosphate acyltransferase family. As to expression, widely expressed.

The protein localises to the plastid. The protein resides in the chloroplast membrane. The catalysed reaction is a fatty acyl-[ACP] + a 1-acyl-sn-glycero-3-phosphate = a 1,2-diacyl-sn-glycero-3-phosphate + holo-[ACP]. It carries out the reaction a 1-acyl-sn-glycero-3-phosphate + an acyl-CoA = a 1,2-diacyl-sn-glycero-3-phosphate + CoA. It participates in phospholipid metabolism; CDP-diacylglycerol biosynthesis; CDP-diacylglycerol from sn-glycerol 3-phosphate: step 2/3. Its function is as follows. Plastidial enzyme of the prokaryotic glycerol-3-phosphate pathway that converts lysophosphatidic acid (LPA) into phosphatidic acid by incorporating an acyl moiety at position sn-2. Utilizes palmitoyl-ACP (16:0-ACP) to produce phosphatidic acid containing a saturated group at position sn-2, which is characteristic of lipids synthesized by the prokaryotic pathway. In vitro, can use 16:0-CoA as acyl donor. This chain is 1-acyl-sn-glycerol-3-phosphate acyltransferase BAT2, chloroplastic, found in Brassica napus (Rape).